The sequence spans 115 residues: Con-Ins T2 (115 aa).

The signal sequence occupies residues 1–21; the sequence is MTTSFYFLLVALGLLLYVCQS. The propeptide occupies 22–29; that stretch reads SFGNQHTR. Disulfide bonds link Cys38–Cys101, Cys50–Cys114, and Cys100–Cys105. Glu48 carries the post-translational modification 4-carboxyglutamate. Positions 53-94 are cleaved as a propeptide — c peptide; that stretch reads KRNDAGKKRGQASPLWQRGGSLSMLKARAKRNEAFHLQRAHR. The residue at position 98 (Glu98) is a 4-carboxyglutamate. The residue at position 109 (Glu109) is a 4-carboxyglutamate. The residue at position 114 (Cys114) is a Cysteine amide.

The protein belongs to the insulin family. Heterodimer of A and B chains; disulfide-linked. As to expression, expressed by the venom gland.

It is found in the secreted. In terms of biological role, this venom insulin facilitates prey capture by rapidly inducing hypoglycemic shock. It is one of the smallest known insulin found in nature and lacks the C-terminal segment of the B chain that, in human insulin, mediates engagement of the insulin receptor (INSR) and assembly of the hormone's hexameric storage form. Despite lacking this segment, it both binds and activates human insulin receptor (long isoform (HIR-B)) with a high potency (EC(50)=15.5 nM). In vivo, intraperitoneal injection of this peptide into zebrafish lowers blood glucose with a lower potency than human insulin. In addition, when applied to water, this peptide reduces overall locomotor activity of zebrafish larvae, observed as a significant decrease in the percentage of time spent swimming and movement frequency. When tested on a mouse model of diabetes, this insulin also lowers blood glucose with a 10-fold lower potency than human insulin. The protein is Con-Ins T2 of Conus tulipa (Fish-hunting cone snail).